We begin with the raw amino-acid sequence, 78 residues long: 4-methyl-3-hydroxyanthranilic acid carrier protein (78 aa).

O-(pantetheine 4'-phosphoryl)serine is present on Ser-33.

The protein belongs to the acyl carrier protein (ACP) family. Post-translationally, 4'-phosphopantetheine is transferred from CoA to a specific serine of the apo-form of this carrier protein.

Its pathway is antibiotic biosynthesis. In terms of biological role, involved in the biosynthesis of actinomycin. Acts as a carrier in the transfer and thioesterification of 4-methyl-3-hydroxyanthranilic acid (4-MHA). The sequence is that of 4-methyl-3-hydroxyanthranilic acid carrier protein from Streptomyces anulatus (Streptomyces chrysomallus).